We begin with the raw amino-acid sequence, 452 residues long: Exodeoxyribonuclease 7 large subunit (452 aa).

This sequence belongs to the XseA family. In terms of assembly, heterooligomer composed of large and small subunits.

It is found in the cytoplasm. The enzyme catalyses Exonucleolytic cleavage in either 5'- to 3'- or 3'- to 5'-direction to yield nucleoside 5'-phosphates.. Functionally, bidirectionally degrades single-stranded DNA into large acid-insoluble oligonucleotides, which are then degraded further into small acid-soluble oligonucleotides. The polypeptide is Exodeoxyribonuclease 7 large subunit (Bacillus cereus (strain B4264)).